We begin with the raw amino-acid sequence, 340 residues long: Large ribosomal subunit protein uL10 (340 aa).

A disordered region spans residues 305-340 (APQPAEEKVEEAEEEEEEEEEASEEEALAGLGALFG). The span at 312–331 (KVEEAEEEEEEEEEASEEEA) shows a compositional bias: acidic residues.

The protein belongs to the universal ribosomal protein uL10 family. In terms of assembly, part of the 50S ribosomal subunit. Forms part of the ribosomal stalk which helps the ribosome interact with GTP-bound translation factors. Forms a heptameric L10(L12)2(L12)2(L12)2 complex, where L10 forms an elongated spine to which the L12 dimers bind in a sequential fashion.

Its function is as follows. Forms part of the ribosomal stalk, playing a central role in the interaction of the ribosome with GTP-bound translation factors. This is Large ribosomal subunit protein uL10 from Thermococcus gammatolerans (strain DSM 15229 / JCM 11827 / EJ3).